Reading from the N-terminus, the 65-residue chain is Large ribosomal subunit protein bL35 (65 aa).

This sequence belongs to the bacterial ribosomal protein bL35 family.

The chain is Large ribosomal subunit protein bL35 from Pectobacterium atrosepticum (strain SCRI 1043 / ATCC BAA-672) (Erwinia carotovora subsp. atroseptica).